A 372-amino-acid chain; its full sequence is Alanine racemase (372 aa).

The active-site Proton acceptor; specific for D-alanine is lysine 41. The residue at position 41 (lysine 41) is an N6-(pyridoxal phosphate)lysine. A substrate-binding site is contributed by arginine 139. Tyrosine 268 acts as the Proton acceptor; specific for L-alanine in catalysis. Methionine 316 is a substrate binding site.

The protein belongs to the alanine racemase family. Pyridoxal 5'-phosphate serves as cofactor.

It catalyses the reaction L-alanine = D-alanine. The protein operates within amino-acid biosynthesis; D-alanine biosynthesis; D-alanine from L-alanine: step 1/1. Its function is as follows. Catalyzes the interconversion of L-alanine and D-alanine. May also act on other amino acids. This is Alanine racemase (alr) from Borreliella burgdorferi (strain ATCC 35210 / DSM 4680 / CIP 102532 / B31) (Borrelia burgdorferi).